Reading from the N-terminus, the 931-residue chain is MDMFPLTWVFLALYFSRHQVRGQPDPPCGGRLNSKDAGYITSPGYPQDYPSHQNCEWIVYAPEPNQKIVLNFNPHFEIEKHDCKYDFIEIRDGDSESADLLGKHCGNIAPPTIISSGSMLYIKFTSDYARQGAGFSLRYEIFKTGSEDCSKNFTSPNGTIESPGFPEKYPHNLDCTFTILAKPKMEIILQFLIFDLEHDPLQVGEGDCKYDWLDIWDGIPHVGPLIGKYCGTKTPSELRSSTGILSLTFHTDMAVAKDGFSARYYLVHQEPLENFQCNVPLGMESGRIANEQISASSTYSDGRWTPQQSRLHGDDNGWTPNLDSNKEYLQVDLRFLTMLTAIATQGAISRETQNGYYVKSYKLEVSTNGEDWMVYRHGKNHKVFQANNDATEVVLNKLHAPLLTRFVRIRPQTWHSGIALRLELFGCRVTDAPCSNMLGMLSGLIADSQISASSTQEYLWSPSAARLVSSRSGWFPRIPQAQPGEEWLQVDLGTPKTVKGVIIQGARGGDSITAVEARAFVRKFKVSYSLNGKDWEYIQDPRTQQPKLFEGNMHYDTPDIRRFDPIPAQYVRVYPERWSPAGIGMRLEVLGCDWTDSKPTVETLGPTVKSEETTTPYPTEEEATECGENCSFEDDKDLQLPSGFNCNFDFLEEPCGWMYDHAKWLRTTWASSSSPNDRTFPDDRNFLRLQSDSQREGQYARLISPPVHLPRSPVCMEFQYQATGGRGVALQVVREASQESKLLWVIREDQGGEWKHGRIILPSYDMEYQIVFEGVIGKGRSGEIAIDDIRISTDVPLENCMEPISAFAGENFKVDIPEIHEREGYEDEIDDEYEVDWSNSSSATSGSGAPSTDKEKSWLYTLDPILITIIAMSSLGVLLGATCAGLLLYCTCSYSGLSSRSCTTLENYNFELYDGLKHKVKMNHQKCCSEA.

The segment at residues 1 to 20 (MDMFPLTWVFLALYFSRHQV) is a signal peptide (or 22). The Extracellular segment spans residues 21–864 (RGQPDPPCGG…EKSWLYTLDP (844 aa)). 3 disulfide bridges follow: C28–C55, C83–C105, and C149–C175. CUB domains follow at residues 28-142 (CGGR…YEIF) and 149-267 (CSKN…YYLV). N-linked (GlcNAc...) asparagine glycans are attached at residues N152 and N157. E197, D211, and D252 together coordinate Ca(2+). The cysteines at positions 208 and 230 are disulfide-linked. 2 disulfide bridges follow: C277–C427 and C434–C592. F5/8 type C domains follow at residues 277–427 (CNVP…LFGC) and 434–592 (CSNM…VLGC). The segment covering 298–310 (TYSDGRWTPQQSR) has biased composition (polar residues). The interval 298–317 (TYSDGRWTPQQSRLHGDDNG) is disordered. The tract at residues 601-622 (VETLGPTVKSEETTTPYPTEEE) is disordered. A glycan (N-linked (GlcNAc...) asparagine) is linked at N629. Residues 642 to 802 (SGFNCNFDFL…TDVPLENCME (161 aa)) enclose the MAM domain. N839 carries an N-linked (GlcNAc...) asparagine glycan. The chain crosses the membrane as a helical span at residues 865–889 (ILITIIAMSSLGVLLGATCAGLLLY). The Cytoplasmic portion of the chain corresponds to 890–931 (CTCSYSGLSSRSCTTLENYNFELYDGLKHKVKMNHQKCCSEA).

The protein belongs to the neuropilin family. As to quaternary structure, heterodimer with NRP1. Binds PLXNB1. In terms of assembly, (Microbial infection) Interacts with human cytomegalovirus proteins gL, UL128, UL130 and UL131A.

The protein resides in the membrane. It is found in the secreted. Its function is as follows. High affinity receptor for semaphorins 3C, 3F, VEGF-165 and VEGF-145 isoforms of VEGF, and the PLGF-2 isoform of PGF. Functionally, (Microbial infection) Acts as a receptor for human cytomegalovirus pentamer-dependent entry in epithelial and endothelial cells. The protein is Neuropilin-2 (NRP2) of Homo sapiens (Human).